The following is a 473-amino-acid chain: ATP synthase subunit beta 2 (473 aa).

158 to 165 (GGAGVGKT) provides a ligand contact to ATP.

This sequence belongs to the ATPase alpha/beta chains family. F-type ATPases have 2 components, CF(1) - the catalytic core - and CF(0) - the membrane proton channel. CF(1) has five subunits: alpha(3), beta(3), gamma(1), delta(1), epsilon(1). CF(0) has three main subunits: a(1), b(2) and c(9-12). The alpha and beta chains form an alternating ring which encloses part of the gamma chain. CF(1) is attached to CF(0) by a central stalk formed by the gamma and epsilon chains, while a peripheral stalk is formed by the delta and b chains.

Its subcellular location is the cell membrane. It catalyses the reaction ATP + H2O + 4 H(+)(in) = ADP + phosphate + 5 H(+)(out). In terms of biological role, produces ATP from ADP in the presence of a proton gradient across the membrane. The catalytic sites are hosted primarily by the beta subunits. The polypeptide is ATP synthase subunit beta 2 (Listeria monocytogenes serotype 4b (strain F2365)).